The chain runs to 182 residues: Ribosome maturation factor RimM (182 aa).

Residues 101–182 (VDEYYWSDLK…RIYVNWGVDY (82 aa)) enclose the PRC barrel domain.

It belongs to the RimM family. In terms of assembly, binds ribosomal protein uS19.

It is found in the cytoplasm. In terms of biological role, an accessory protein needed during the final step in the assembly of 30S ribosomal subunit, possibly for assembly of the head region. Essential for efficient processing of 16S rRNA. May be needed both before and after RbfA during the maturation of 16S rRNA. It has affinity for free ribosomal 30S subunits but not for 70S ribosomes. The sequence is that of Ribosome maturation factor RimM from Acinetobacter baylyi (strain ATCC 33305 / BD413 / ADP1).